The following is a 185-amino-acid chain: Lactoylglutathione lyase (185 aa).

A disordered region spans residues 1–21 (MASEAKESPANNPGLSTVRDE). One can recognise a VOC domain in the interval 27 to 174 (IMQQTMFRVK…DGYWIEIFDL (148 aa)). Substrate is bound by residues glutamine 30 and arginine 34. Glutamine 30 is a Zn(2+) binding site. Residue glutamate 96 participates in Zn(2+) binding. Residues asparagine 100, arginine 120, histidine 124, and 154–155 (KM) each bind substrate. Histidine 124 lines the Zn(2+) pocket. Residue glutamate 170 participates in Zn(2+) binding. The active-site Proton donor/acceptor is the glutamate 170.

Belongs to the glyoxalase I family. It depends on Zn(2+) as a cofactor.

The catalysed reaction is (R)-S-lactoylglutathione = methylglyoxal + glutathione. The protein operates within secondary metabolite metabolism; methylglyoxal degradation; (R)-lactate from methylglyoxal: step 1/2. In terms of biological role, catalyzes the conversion of hemimercaptal, formed from methylglyoxal and glutathione, to S-lactoylglutathione. The sequence is that of Lactoylglutathione lyase (GLY I) from Brassica juncea (Indian mustard).